We begin with the raw amino-acid sequence, 1984 residues long: Sodium channel protein type 9 subunit alpha (1984 aa).

Residues 1–125 are Cytoplasmic-facing; it reads MAMLPPPGPQ…RRISIKILVH (125 aa). Residues 26 to 47 show a composition bias toward basic and acidic residues; sequence RIAEGKTKEPKEEKKDDHDEGP. The segment at 26–55 is disordered; that stretch reads RIAEGKTKEPKEEKKDDHDEGPKPSSDLEA. Residues 112-408 form an I repeat; sequence FSPLRRISIK…VAMAYEEQNQ (297 aa). A helical transmembrane segment spans residues 126–145; it reads SLFSMLIMCTILTNCIFMTM. At 146-150 the chain is on the extracellular side; that stretch reads NNPAE. The chain crosses the membrane as a helical span at residues 151–172; the sequence is WTKNVEYTFTGIYTFESLVKIF. Over 173 to 185 the chain is Cytoplasmic; sequence ARGFCVGEFTFLR. A helical membrane pass occupies residues 186-204; it reads DPWNWLDFIVIVFAYLTEF. Topologically, residues 205-210 are extracellular; that stretch reads VNLGNV. N-linked (GlcNAc...) asparagine glycosylation is present at asparagine 209. Residues 211–227 traverse the membrane as a helical segment; the sequence is SALRTFRVLRALKTISV. Residues 228–241 are Cytoplasmic-facing; the sequence is IPGLKTIVGALIQS. Residues 242–267 traverse the membrane as a helical segment; it reads VKKLSDVIILTVFCLSVFALIGLQLF. Topologically, residues 268-344 are extracellular; that stretch reads MGHLKHKCLR…PDYGYTSFDT (77 aa). Cysteine 275 and cysteine 322 are disulfide-bonded. Asparagine 281 carries N-linked (GlcNAc...) asparagine glycosylation. The pore-forming intramembrane region spans 345–361; sequence FSWAFLALFRLMTQDYW. Residues 362–374 are Extracellular-facing; sequence ENLYQQTLRAAGK. The helical transmembrane segment at 375-400 threads the bilayer; sequence TYMIFFVVVIFLGSFYLINLILAVVA. The Cytoplasmic segment spans residues 401-742; it reads MAYEEQNQAN…FIYIIVMDPF (342 aa). Positions 459 to 469 are enriched in low complexity; that stretch reads SSSETSKLSSK. Disordered stretches follow at residues 459–517 and 563–610; these read SSSE…LGVE and GSET…PPML. Over residues 472-484 the composition is skewed to basic residues; it reads KERRNRRKKKNQK. Composition is skewed to basic and acidic residues over residues 487–508 and 571–583; these read SSGE…ESIS and DEHS…ESRR. One copy of the II repeat lies at 723–986; sequence CSPFWIKFKK…EEDTDANNLQ (264 aa). The chain crosses the membrane as a helical span at residues 743 to 759; sequence VDLAITICIVLNTLFMA. Topologically, residues 760-768 are extracellular; sequence MEHHPMTEE. Residues 769-793 form a helical membrane-spanning segment; the sequence is FKNVLVVGNLVFTGIFAAEMVLKLI. The Cytoplasmic portion of the chain corresponds to 794-802; the sequence is AMDPYEYFQ. The chain crosses the membrane as a helical span at residues 803-819; sequence VGWNVFDSLIVTLSLVE. Topologically, residues 820-828 are extracellular; that stretch reads LFLADVEGL. A helical membrane pass occupies residues 829-845; it reads SVLRSFRLLRVFKLAKS. At 846 to 862 the chain is on the cytoplasmic side; it reads WPTLNMLIKIIGNSVGP. Residues 863-885 form a helical membrane-spanning segment; that stretch reads LGNLTLVLAIIVFIFAVVGMQLF. Over 886–912 the chain is Extracellular; the sequence is GKSYKECVCKINDDCSLPRWHMNDFFH. Residues cysteine 894 and cysteine 900 are joined by a disulfide bond. The pore-forming intramembrane region spans 913–925; sequence SFLIVFRVLCGEW. At 926–937 the chain is on the extracellular side; the sequence is IETMWDCMEVAG. Cysteine 932 and cysteine 941 are oxidised to a cystine. Residues 938–964 traverse the membrane as a helical segment; that stretch reads QAMCLIVYMMVMVIGNLVVLNLFLALL. The Cytoplasmic portion of the chain corresponds to 965-1184; it reads LSSFSSDNLS…WWNIRKTCYR (220 aa). Residues 1087–1146 are disordered; the sequence is PIAPGESDLENMNTEELSSDSESEYSKERLNRSSSSECSTVDNALPGEGEEAEAEPVNSD. Residues 1118–1128 show a composition bias toward polar residues; the sequence is RSSSSECSTVD. A compositionally biased stretch (acidic residues) spans 1134-1146; it reads EGEEAEAEPVNSD. Residues 1177–1485 form an III repeat; it reads NIRKTCYRIV…KKYYNAMKKL (309 aa). Residues 1185–1209 form a helical membrane-spanning segment; that stretch reads IVEHSWFESFIVLMILLSSGALAFE. Residues 1210 to 1221 lie on the Extracellular side of the membrane; sequence DIYIEKKKTIKI. The chain crosses the membrane as a helical span at residues 1222 to 1247; sequence ILEYADKIFTYIFILEMLLKWVAYGY. Over 1248–1249 the chain is Cytoplasmic; that stretch reads KT. Residues 1250-1275 traverse the membrane as a helical segment; that stretch reads YFTNAWCWLDFLIVDVSLVTLVANTL. At 1276–1284 the chain is on the extracellular side; sequence GYSDLGPIK. Residues 1285-1301 traverse the membrane as a helical segment; sequence SLRTLRALRPLRALSRF. The Cytoplasmic portion of the chain corresponds to 1302-1314; sequence EGMRVVVNALIGA. A helical transmembrane segment spans residues 1315-1339; that stretch reads IPSIMNVLLVCLIFWLIFSIMGVNL. At 1340 to 1391 the chain is on the extracellular side; the sequence is FAGKFYQCVNTTDDSRFPTKQVSNRSECFALMNGSQNVRWKNLKVNFDNVGL. The cysteines at positions 1347 and 1367 are disulfide-linked. N-linked (GlcNAc...) asparagine glycans are attached at residues asparagine 1349, asparagine 1363, and asparagine 1372. The segment at residues 1392 to 1402 is an intramembrane region (pore-forming); that stretch reads RYLSLLQVATF. Residues 1403–1428 lie on the Extracellular side of the membrane; that stretch reads KGWMDIMYAAVDSVNVDQQPSYEHNL. A helical membrane pass occupies residues 1429–1454; the sequence is YMYIYFVIFIIFGSFFTLNLFIGVII. The Cytoplasmic segment spans residues 1455–1511; it reads DNFNQQKKKLGGQDIFMTEEQKKYYNAMKKLGSKKPQKPIPRPGNKFQGCIFDLVTN. At serine 1487 the chain carries Phosphoserine; by PKC. One copy of the IV repeat lies at 1494–1792; the sequence is IPRPGNKFQG…WEKFDPDATQ (299 aa). The helical transmembrane segment at 1512–1531 threads the bilayer; it reads QAFDITIMILICLNMVTMMV. At 1532-1542 the chain is on the extracellular side; it reads EKEGQSDYMTD. The helical transmembrane segment at 1543–1564 threads the bilayer; that stretch reads VLYWINVVFIILFTGECVLKLI. Residues 1565–1573 lie on the Cytoplasmic side of the membrane; sequence SLRHYYFTI. A helical membrane pass occupies residues 1574 to 1595; it reads GWNIFDFVVVILSIVGMFLAEL. The Extracellular segment spans residues 1596–1604; the sequence is IETYFVSPT. Residues 1605–1624 traverse the membrane as a helical segment; that stretch reads LFRVIRLARIGRILRLIKGA. Topologically, residues 1625-1637 are cytoplasmic; it reads KGIRTLLFALMMS. A helical transmembrane segment spans residues 1638 to 1660; the sequence is LPALFNIGLLLFLVMFIYAIFGM. Topologically, residues 1661–1683 are extracellular; it reads SNFAYVKKEAGINDMFNFETFGN. The segment at residues 1684-1696 is an intramembrane region (pore-forming); the sequence is SMICLFQITTSAG. Topologically, residues 1697-1730 are extracellular; it reads WDGLLAPILNSAPPDCDPKKVHPGSSTEGDCGSP. Cysteine 1712 and cysteine 1727 form a disulfide bridge. Residues 1731–1756 traverse the membrane as a helical segment; it reads SVGIFYFVSYIIISFLVVVNMYIAVI. Residues 1757-1984 are Cytoplasmic-facing; the sequence is LENFSVATEE…KGKDGKETKK (228 aa). Positions 1886–1915 constitute an IQ domain; that stretch reads EDVSATVIQRAYRRYRLRQNVKNISSIYIK. The disordered stretch occupies residues 1924 to 1984; sequence PNKGDIVFDN…KGKDGKETKK (61 aa). Residues 1933 to 1956 show a composition bias toward polar residues; that stretch reads NVNSSSPEKTDATASTISPPSYDS. A compositionally biased stretch (basic and acidic residues) spans 1958–1984; the sequence is TKPDKEKYEKDKTEKEDKGKDGKETKK.

Belongs to the sodium channel (TC 1.A.1.10) family. Nav1.7/SCN9A subfamily. As to quaternary structure, the Nav1.7 voltage-gated sodium channel consists of an ion-conducting alpha subunit SCN9A which is functional on its own regulated by one or more beta-1 (SCN1B), beta-2 (SCN2B), beta-3 (SCN3B) and beta-4 (SCN4B) subunits. SCN1B and SCN3B are non-covalently associated with SCN9A. SCN2B and SCN4B are disulfide-linked to SCN9A. SCN1B regulates channel inactivation. Interacts with NEDD4 and NEDD4L; regulates Nav1.7 activity most probably through ubiquitination and subsequent endocytosis. Interacts with TMEM233; modulates the gating properties of NaV1.7. In terms of processing, phosphorylation at Ser-1487 by PKC in a highly conserved cytoplasmic loop increases peak sodium currents. Ubiquitinated by NEDD4L; which may promote its endocytosis. Expressed in the sciatic nerve, spinal cord, brainstem, cerebellum and cortex, but not expressed in the lung, skeletal and cardiac muscles, kidney and liver.

The protein localises to the cell membrane. It localises to the cell projection. Its subcellular location is the neuron projection. It is found in the axon. It catalyses the reaction Na(+)(in) = Na(+)(out). Pore-forming subunit of Nav1.7, a voltage-gated sodium (Nav) channel that directly mediates the depolarizing phase of action potentials in excitable membranes. Navs, also called VGSCs (voltage-gated sodium channels) or VDSCs (voltage-dependent sodium channels), operate by switching between closed and open conformations depending on the voltage difference across the membrane. In the open conformation they allow Na(+) ions to selectively pass through the pore, along their electrochemical gradient. The influx of Na(+) ions provokes membrane depolarization, initiating the propagation of electrical signals throughout cells and tissues. Nav1.7 plays a crucial role in controlling the excitability and action potential propagation from nociceptor neurons, thereby contributing to the sensory perception of pain. In Oryctolagus cuniculus (Rabbit), this protein is Sodium channel protein type 9 subunit alpha.